A 65-amino-acid chain; its full sequence is Ferredoxin-1 (65 aa).

Residues Arg3–Glu31 enclose the 4Fe-4S ferredoxin-type domain. The [4Fe-4S] cluster site is built by Cys12, Cys15, Cys18, and Cys55.

In terms of assembly, homodimer. The cofactor is [4Fe-4S] cluster.

Functionally, ferredoxins are iron-sulfur proteins that transfer electrons in a wide variety of metabolic reactions. This chain is Ferredoxin-1 (fd1), found in Desulfocurvibacter africanus (Desulfovibrio africanus).